Consider the following 1217-residue polypeptide: MTIPEKPQGVIWTDAQWQSIYATGQDVLVAAAAGSGKTAVLVERIIQKILRDGIDVDRLLVVTFTNLSAREMKHRVDQRIQEASIADPANAHLKNQRIKIHQAQISTLHSFCLKLIQQHYDVLNIDPNFRTSSEAENILLLEQTIDEVIEQHYDILDPAFIELTEQLSSDRSDDQFRMIIKQLYFFSVANPNPTNWLDQLVTPYEEEAQQAQLIQILTDLSKVFITAAYDALNKAYDLFSMMDGVDKHLAVIEDERRLMGRVLEGGFIDIPYLTGHEFGARLPNITAKIKEANEMMVDALKDAKLQYKKYKSLIDKVKSDYFSREADDLKADMQQLAPRVKYLARIVKDVMSEFNRKKRSKNILDFSDYEHFALQILTNEDGSPSEIAESYRQHFQEILVDEYQDTNRVQEKILSCIKTGDEHNGNLFMVGDVKQSIYKFRQADPSLFIEKYQRFTIDGDGTGRRMDLSQNFRSRKEVLSTTNYIFKHMMDEQVGEVNYDESAQLYYGAPYDESDHPVNLKVLIEADQEHSDLTGSEQEAHFIVEQVKDILEHQKVYDMKTRSYRSATYKDIVILERSFGQARNLQQAFKNEDIPFHVNSREGYFEQTEVRLALSFLRAIDNPLQDIYLVGLMRSVIYQFKEDELAQIRILSPNDDYFYQSIVNYINDEAADAILVDKLKMFLSDIQSYQQYSKDHPVYQLIDKFYNDHYVIQYFSGLIGGRGRRANLYGLFNKAIEFENSSFRGLYQFIRFIDELIERGKDFGEENVVGPNDNVVRMMTIHSSKGLEFPFVIYSGLSKDFNKRDLKQPVILNQQFGLGMDYFDVDKEMAFPSLASVAYRAVAEKELVSEEMRLVYVALTRAKEQLYLIGRVKNDKSLLELEQLSISGEHIAVNERLTSPNPFHLIYSILSKHQSASIPDDLKFEKDIAQVEDSSRPNVNISIIYFEDVSTETILDNDEYRSVNQLETMQNGNEDVKAQIKHQLDYQYPYVNDTKKPSKQSVSELKRQYETEESGTSYERVRQYRIGFSTYERPKFLSEQGKRKANEIGTLMHTVMQHLPFKKERISEVELHQYIDGLIDKHIIEADAKKDIRMDEIMTFINSELYSIIAEAEQVYRELPFVVNQALVDQLPQGDEDVSIIQGMIDLIFVKDGVHYFVDYKTDAFNRRRGMTDEEIGTQLKNKYKIQMKYYQNTLQTILNKEVKGYLYFFKFGTLQL.

Residues 10–475 (VIWTDAQWQS…MDLSQNFRSR (466 aa)) enclose the UvrD-like helicase ATP-binding domain. 31 to 38 (AAAGSGKT) contacts ATP. The 296-residue stretch at 491–786 (DEQVGEVNYD…RMMTIHSSKG (296 aa)) folds into the UvrD-like helicase C-terminal domain.

Belongs to the helicase family. AddA subfamily. As to quaternary structure, heterodimer of AddA and AddB/RexB. Requires Mg(2+) as cofactor.

It carries out the reaction Couples ATP hydrolysis with the unwinding of duplex DNA by translocating in the 3'-5' direction.. The enzyme catalyses ATP + H2O = ADP + phosphate + H(+). The heterodimer acts as both an ATP-dependent DNA helicase and an ATP-dependent, dual-direction single-stranded exonuclease. Recognizes the chi site generating a DNA molecule suitable for the initiation of homologous recombination. The AddA nuclease domain is required for chi fragment generation; this subunit has the helicase and 3' -&gt; 5' nuclease activities. The polypeptide is ATP-dependent helicase/nuclease subunit A (Staphylococcus aureus (strain bovine RF122 / ET3-1)).